The sequence spans 222 residues: Deoxyribose-phosphate aldolase (222 aa).

The Proton donor/acceptor role is filled by D90. K152 (schiff-base intermediate with acetaldehyde) is an active-site residue. Residue K181 is the Proton donor/acceptor of the active site.

It belongs to the DeoC/FbaB aldolase family. DeoC type 1 subfamily.

Its subcellular location is the cytoplasm. It catalyses the reaction 2-deoxy-D-ribose 5-phosphate = D-glyceraldehyde 3-phosphate + acetaldehyde. It functions in the pathway carbohydrate degradation; 2-deoxy-D-ribose 1-phosphate degradation; D-glyceraldehyde 3-phosphate and acetaldehyde from 2-deoxy-alpha-D-ribose 1-phosphate: step 2/2. Catalyzes a reversible aldol reaction between acetaldehyde and D-glyceraldehyde 3-phosphate to generate 2-deoxy-D-ribose 5-phosphate. The polypeptide is Deoxyribose-phosphate aldolase (Pectobacterium carotovorum subsp. carotovorum (strain PC1)).